The following is a 236-amino-acid chain: Phosphoribosylaminoimidazole-succinocarboxamide synthase (236 aa).

The protein belongs to the SAICAR synthetase family.

It catalyses the reaction 5-amino-1-(5-phospho-D-ribosyl)imidazole-4-carboxylate + L-aspartate + ATP = (2S)-2-[5-amino-1-(5-phospho-beta-D-ribosyl)imidazole-4-carboxamido]succinate + ADP + phosphate + 2 H(+). It participates in purine metabolism; IMP biosynthesis via de novo pathway; 5-amino-1-(5-phospho-D-ribosyl)imidazole-4-carboxamide from 5-amino-1-(5-phospho-D-ribosyl)imidazole-4-carboxylate: step 1/2. This is Phosphoribosylaminoimidazole-succinocarboxamide synthase from Rickettsia felis (strain ATCC VR-1525 / URRWXCal2) (Rickettsia azadi).